A 198-amino-acid polypeptide reads, in one-letter code: Holliday junction resolvase RecU (198 aa).

The tract at residues 1 to 22 is disordered; the sequence is MVNYPHKVSSQKRQTSLSQPKN. Residues 11–22 are compositionally biased toward polar residues; sequence QKRQTSLSQPKN. Mg(2+)-binding residues include threonine 81, aspartate 83, glutamate 96, and glutamine 115.

The protein belongs to the RecU family. It depends on Mg(2+) as a cofactor.

The protein resides in the cytoplasm. It catalyses the reaction Endonucleolytic cleavage at a junction such as a reciprocal single-stranded crossover between two homologous DNA duplexes (Holliday junction).. Its function is as follows. Endonuclease that resolves Holliday junction intermediates in genetic recombination. Cleaves mobile four-strand junctions by introducing symmetrical nicks in paired strands. Promotes annealing of linear ssDNA with homologous dsDNA. Required for DNA repair, homologous recombination and chromosome segregation. The polypeptide is Holliday junction resolvase RecU (Streptococcus pneumoniae serotype 2 (strain D39 / NCTC 7466)).